Reading from the N-terminus, the 89-residue chain is Translation initiation factor IF-1 1 (89 aa).

The S1-like domain occupies 1–73 (MSNKEQLIEM…TKGRITFRHL (73 aa)).

The protein belongs to the IF-1 family. As to quaternary structure, component of the 30S ribosomal translation pre-initiation complex which assembles on the 30S ribosome in the order IF-2 and IF-3, IF-1 and N-formylmethionyl-tRNA(fMet); mRNA recruitment can occur at any time during PIC assembly.

It localises to the cytoplasm. One of the essential components for the initiation of protein synthesis. Stabilizes the binding of IF-2 and IF-3 on the 30S subunit to which N-formylmethionyl-tRNA(fMet) subsequently binds. Helps modulate mRNA selection, yielding the 30S pre-initiation complex (PIC). Upon addition of the 50S ribosomal subunit IF-1, IF-2 and IF-3 are released leaving the mature 70S translation initiation complex. The chain is Translation initiation factor IF-1 1 from Acidovorax sp. (strain JS42).